A 293-amino-acid polypeptide reads, in one-letter code: DNA repair protein RecO (293 aa).

The protein belongs to the RecO family.

In terms of biological role, involved in DNA repair and RecF pathway recombination. In Acaryochloris marina (strain MBIC 11017), this protein is DNA repair protein RecO.